Here is a 274-residue protein sequence, read N- to C-terminus: Urease accessory protein UreD (274 aa).

The protein belongs to the UreD family. UreD, UreF and UreG form a complex that acts as a GTP-hydrolysis-dependent molecular chaperone, activating the urease apoprotein by helping to assemble the nickel containing metallocenter of UreC. The UreE protein probably delivers the nickel.

Its subcellular location is the cytoplasm. Functionally, required for maturation of urease via the functional incorporation of the urease nickel metallocenter. The polypeptide is Urease accessory protein UreD (Enterobacter sp. (strain 638)).